Consider the following 389-residue polypeptide: 8-amino-7-oxononanoate synthase (389 aa).

Position 31 (Arg-31) interacts with substrate. 109 to 110 contributes to the pyridoxal 5'-phosphate binding site; it reads GY. Position 134 (His-134) interacts with substrate. Residues Ser-180, 205-208, and 236-239 each bind pyridoxal 5'-phosphate; these read DEAH and TLSK. Lys-239 carries the post-translational modification N6-(pyridoxal phosphate)lysine. Substrate is bound at residue Thr-349.

It belongs to the class-II pyridoxal-phosphate-dependent aminotransferase family. BioF subfamily. Homodimer. Pyridoxal 5'-phosphate serves as cofactor.

The catalysed reaction is 6-carboxyhexanoyl-[ACP] + L-alanine + H(+) = (8S)-8-amino-7-oxononanoate + holo-[ACP] + CO2. It participates in cofactor biosynthesis; biotin biosynthesis. Its function is as follows. Catalyzes the decarboxylative condensation of pimeloyl-[acyl-carrier protein] and L-alanine to produce 8-amino-7-oxononanoate (AON), [acyl-carrier protein], and carbon dioxide. The sequence is that of 8-amino-7-oxononanoate synthase from Mycobacterium ulcerans (strain Agy99).